We begin with the raw amino-acid sequence, 314 residues long: Ribosomal protein L11 methyltransferase (314 aa).

S-adenosyl-L-methionine contacts are provided by threonine 161, glycine 182, aspartate 204, and asparagine 248.

It belongs to the methyltransferase superfamily. PrmA family.

The protein localises to the cytoplasm. It carries out the reaction L-lysyl-[protein] + 3 S-adenosyl-L-methionine = N(6),N(6),N(6)-trimethyl-L-lysyl-[protein] + 3 S-adenosyl-L-homocysteine + 3 H(+). Its function is as follows. Methylates ribosomal protein L11. The protein is Ribosomal protein L11 methyltransferase of Listeria innocua serovar 6a (strain ATCC BAA-680 / CLIP 11262).